Reading from the N-terminus, the 75-residue chain is Large ribosomal subunit protein bL31 (75 aa).

It belongs to the bacterial ribosomal protein bL31 family. Type A subfamily. Part of the 50S ribosomal subunit.

In terms of biological role, binds the 23S rRNA. This is Large ribosomal subunit protein bL31 from Chlorobium phaeobacteroides (strain BS1).